We begin with the raw amino-acid sequence, 433 residues long: tRNA(Ile)-lysidine synthase (433 aa).

ATP is bound at residue Ser37–Ser42.

It belongs to the tRNA(Ile)-lysidine synthase family.

The protein localises to the cytoplasm. It carries out the reaction cytidine(34) in tRNA(Ile2) + L-lysine + ATP = lysidine(34) in tRNA(Ile2) + AMP + diphosphate + H(+). Its function is as follows. Ligates lysine onto the cytidine present at position 34 of the AUA codon-specific tRNA(Ile) that contains the anticodon CAU, in an ATP-dependent manner. Cytidine is converted to lysidine, thus changing the amino acid specificity of the tRNA from methionine to isoleucine. In Leptospira interrogans serogroup Icterohaemorrhagiae serovar copenhageni (strain Fiocruz L1-130), this protein is tRNA(Ile)-lysidine synthase.